The sequence spans 253 residues: Small ribosomal subunit protein uS3 (253 aa).

The region spanning 38 to 106 (IRKYIHARLS…EVQINIFEIK (69 aa)) is the KH type-2 domain. A disordered region spans residues 216 to 253 (AGMDKKQAGQGGGKGGDSPRGDRKPFNKGGKPDARKRK). The span at 232–253 (DSPRGDRKPFNKGGKPDARKRK) shows a compositional bias: basic and acidic residues.

Belongs to the universal ribosomal protein uS3 family. Part of the 30S ribosomal subunit. Forms a tight complex with proteins S10 and S14.

Binds the lower part of the 30S subunit head. Binds mRNA in the 70S ribosome, positioning it for translation. The protein is Small ribosomal subunit protein uS3 of Flavobacterium psychrophilum (strain ATCC 49511 / DSM 21280 / CIP 103535 / JIP02/86).